The sequence spans 157 residues: Transcriptional repressor NrdR (157 aa).

The segment at 3–34 (CPFCGHMESQVKDSRPSEDGAAIRRRRLCPEC) is a zinc-finger region. The ATP-cone domain maps to 49 to 139 (LTIVKRSGRR…VYRDFRETSD (91 aa)).

The protein belongs to the NrdR family. Zn(2+) serves as cofactor.

Functionally, negatively regulates transcription of bacterial ribonucleotide reductase nrd genes and operons by binding to NrdR-boxes. The protein is Transcriptional repressor NrdR of Caulobacter sp. (strain K31).